The primary structure comprises 160 residues: Putative control protein C.MjaVP (160 aa).

In terms of biological role, may be involved in control of expression of the type II restriction enzyme MjaV and/or its methyltransferase M.MjaV. The polypeptide is Putative control protein C.MjaVP (Methanocaldococcus jannaschii (strain ATCC 43067 / DSM 2661 / JAL-1 / JCM 10045 / NBRC 100440) (Methanococcus jannaschii)).